The primary structure comprises 483 residues: Regulatory protein ViaA (483 aa).

Belongs to the ViaA family. In terms of assembly, homodimer. Interacts with RavA.

It is found in the cytoplasm. Component of the RavA-ViaA chaperone complex, which may act on the membrane to optimize the function of some of the respiratory chains. ViaA stimulates the ATPase activity of RavA. In Salmonella choleraesuis (strain SC-B67), this protein is Regulatory protein ViaA.